The chain runs to 1267 residues: RNA-directed RNA polymerase lambda-3 (1267 aa).

One can recognise a RdRp catalytic domain in the interval 555 to 792; that stretch reads LSTTSGSAVI…KLYFIFGCRI (238 aa).

Belongs to the reoviridae RNA-directed RNA polymerase family.

It localises to the virion. It catalyses the reaction RNA(n) + a ribonucleoside 5'-triphosphate = RNA(n+1) + diphosphate. Functionally, RNA-directed RNA polymerase that is involved in transcription and genome replication. Following infection, it catalyzes the synthesis of fully conservative plus strands. After core assembly, which consists in recruitment of one capped plus-strand for each genomic segments and polymerase complexes, the polymerase switches mode and catalyzes the synthesis of complementary minus-strands. The protein is RNA-directed RNA polymerase lambda-3 (L1) of Mammalia (T1L).